Reading from the N-terminus, the 300-residue chain is Ribosomal protein L11 methyltransferase (300 aa).

The S-adenosyl-L-methionine site is built by Thr-152, Gly-173, Asp-195, and Asn-234.

It belongs to the methyltransferase superfamily. PrmA family.

It is found in the cytoplasm. The enzyme catalyses L-lysyl-[protein] + 3 S-adenosyl-L-methionine = N(6),N(6),N(6)-trimethyl-L-lysyl-[protein] + 3 S-adenosyl-L-homocysteine + 3 H(+). In terms of biological role, methylates ribosomal protein L11. The protein is Ribosomal protein L11 methyltransferase of Paraburkholderia phymatum (strain DSM 17167 / CIP 108236 / LMG 21445 / STM815) (Burkholderia phymatum).